A 226-amino-acid chain; its full sequence is Cold-regulated 413 inner membrane protein 2, chloroplastic (226 aa).

A chloroplast-targeting transit peptide spans 1-76 (MASLCLSSSR…RKRGSSVVCY (76 aa)). Residues 77–79 (ATP) lie on the Stromal side of the membrane. Residues 80–100 (MLSVHNLQWISTISCVALMFA) form a helical membrane-spanning segment. Over 101-103 (RGT) the chain is Chloroplast intermembrane. The helical transmembrane segment at 104-124 (GIHKSFVVPLFALQAPMGIVS) threads the bilayer. Residues 125 to 129 (WMKGE) are Stromal-facing. The chain crosses the membrane as a helical span at residues 130 to 150 (YGIWAAFLALLTRLFFSFPVE). The Chloroplast intermembrane portion of the chain corresponds to 151 to 152 (LE). A helical membrane pass occupies residues 153 to 173 (LPFIALLLVIVAPYQVMSIRG). Topologically, residues 174–176 (KQE) are stromal. A helical membrane pass occupies residues 177–197 (GAILSLAISCFLAFQHFSRAG). Residues 198–205 (TLQKAFDQ) lie on the Chloroplast intermembrane side of the membrane. The helical transmembrane segment at 206 to 226 (NSVLATVAIIGVTVVSFLFLI) threads the bilayer.

The protein belongs to the Cold-regulated 413 protein family.

The protein resides in the plastid. Its subcellular location is the chloroplast inner membrane. This Arabidopsis thaliana (Mouse-ear cress) protein is Cold-regulated 413 inner membrane protein 2, chloroplastic (COR413IM2).